A 137-amino-acid chain; its full sequence is MRTFWIVAMLLVGVEGSLVELGKMILQETGKNPITSYGIYGCNCGVGSRHKPKDGTDRCCFVHKCCYKKLTDCDPKMDGYTYSFKDKTIICDVNNPCLKEMCECDKAVAICLRENLDTYNKKYKIYPKFLCKKPDTC.

An N-terminal signal peptide occupies residues 1–16; it reads MRTFWIVAMLLVGVEG. 7 cysteine pairs are disulfide-bonded: Cys42–Cys131, Cys44–Cys60, Cys59–Cys111, Cys65–Cys137, Cys66–Cys104, Cys73–Cys97, and Cys91–Cys102. The interval 121-133 is important for membrane-damaging activities in eukaryotes and bacteria; heparin-binding; sequence KKYKIYPKFLCKK.

In terms of assembly, homodimer; non-covalently linked. As to expression, expressed by the venom gland.

Its subcellular location is the secreted. Its function is as follows. Snake venom phospholipase A2 homolog that lacks enzymatic activity. Displays edema-inducing activities and may be myotoxic. A model of myotoxic mechanism has been proposed: an apo Lys49-PLA2 is activated by the entrance of a hydrophobic molecule (e.g. fatty acid) at the hydrophobic channel of the protein leading to a reorientation of a monomer. This reorientation causes a transition between 'inactive' to 'active' states, causing alignment of C-terminal and membrane-docking sites (MDoS) side-by-side and putting the membrane-disruption sites (MDiS) in the same plane, exposed to solvent and in a symmetric position for both monomers. The MDoS region stabilizes the toxin on membrane by the interaction of charged residues with phospholipid head groups. Subsequently, the MDiS region destabilizes the membrane with penetration of hydrophobic residues. This insertion causes a disorganization of the membrane, allowing an uncontrolled influx of ions (i.e. calcium and sodium), and eventually triggering irreversible intracellular alterations and cell death. In Crotalus atrox (Western diamondback rattlesnake), this protein is Basic phospholipase A2 homolog Cax-K49.